The chain runs to 156 residues: Probable inactive ribonuclease-like protein 13 (156 aa).

The first 20 residues, 1 to 20 (MAPAVTRLLFLQLVLGPTLV), serve as a signal peptide directing secretion. Asn126 carries an N-linked (GlcNAc...) asparagine glycan.

Belongs to the pancreatic ribonuclease family.

The protein resides in the secreted. In terms of biological role, does not exhibit any ribonuclease activity. The sequence is that of Probable inactive ribonuclease-like protein 13 (RNASE13) from Homo sapiens (Human).